Reading from the N-terminus, the 207-residue chain is 3-demethoxyubiquinol 3-hydroxylase (207 aa).

The segment covering 22–32 (ERANPADRLAP) has biased composition (basic and acidic residues). The segment at 22–41 (ERANPADRLAPETEQMNPEE) is disordered. 6 residues coordinate Fe cation: E56, E86, H89, E138, E170, and H173.

This sequence belongs to the COQ7 family. Fe cation serves as cofactor.

The protein resides in the cell membrane. It carries out the reaction a 5-methoxy-2-methyl-3-(all-trans-polyprenyl)benzene-1,4-diol + AH2 + O2 = a 3-demethylubiquinol + A + H2O. The protein operates within cofactor biosynthesis; ubiquinone biosynthesis. Its function is as follows. Catalyzes the hydroxylation of 2-nonaprenyl-3-methyl-6-methoxy-1,4-benzoquinol during ubiquinone biosynthesis. The chain is 3-demethoxyubiquinol 3-hydroxylase from Cupriavidus metallidurans (strain ATCC 43123 / DSM 2839 / NBRC 102507 / CH34) (Ralstonia metallidurans).